Reading from the N-terminus, the 124-residue chain is Small ribosomal subunit protein uS13 (124 aa).

The tract at residues 95 to 124 (GLPVRGQRTKTNARTRKGPKRTIAGKKKAR) is disordered.

It belongs to the universal ribosomal protein uS13 family. Part of the 30S ribosomal subunit. Forms a loose heterodimer with protein S19. Forms two bridges to the 50S subunit in the 70S ribosome.

Its function is as follows. Located at the top of the head of the 30S subunit, it contacts several helices of the 16S rRNA. In the 70S ribosome it contacts the 23S rRNA (bridge B1a) and protein L5 of the 50S subunit (bridge B1b), connecting the 2 subunits; these bridges are implicated in subunit movement. Contacts the tRNAs in the A and P-sites. The polypeptide is Small ribosomal subunit protein uS13 (Mycobacterium avium (strain 104)).